We begin with the raw amino-acid sequence, 579 residues long: Protein LYRIC (579 aa).

Over 1-48 (MAARSWQDELAQQAEEGSARLRELLSVGLGFLRTELGLDLGLEPKRYP) the chain is Lumenal. The interval 1–71 (MAARSWQDEL…LLLFLLGYGW (71 aa)) is activation of NF-kappa-B. Residues 49 to 69 (GWVILVGTGALGLLLLFLLGY) traverse the membrane as a helical segment. Over 70-579 (GWAAACAGAR…KKKKKARRET (510 aa)) the chain is Cytoplasmic. The tract at residues 72–168 (AAACAGARKK…EKSKKNKKKS (97 aa)) is interaction with BCCIP. Residues 78–222 (ARKKRRSPPR…SGSLDSTIPG (145 aa)) are disordered. The interaction with RELA stretch occupies residues 100-204 (DDLAQLKNLR…ISHREKRQQR (105 aa)). Over residues 108–126 (LRSEEQKKKNRKKLPEKPK) the composition is skewed to basic and acidic residues. Residues 159–168 (EKSKKNKKKS) show a composition bias toward basic residues. A Phosphoserine modification is found at S179. The span at 197-207 (HREKRQQRKRD) shows a compositional bias: basic residues. Residues S215 and S250 each carry the phosphoserine modification. K263 carries the N6-acetyllysine modification. A disordered region spans residues 277 to 579 (NLTVNGGGWS…KKKKKARRET (303 aa)). Phosphoserine is present on residues S297, S303, and S308. A compositionally biased stretch (polar residues) spans 317–329 (SAWTQDTGDTNAN). 2 positions are modified to phosphoserine: S341 and S366. Polar residues-rich tracts occupy residues 351–369 (EPVSQSTTSDYQWDVSRNQ), 380–391 (NGLSSADPSSDW), and 410–420 (LKSQEPISNDQ). The interval 378 to 440 (GLNGLSSADP…EGALPTGKSK (63 aa)) is lung-homing for mammary tumors. S412 and S423 each carry phosphoserine. Over residues 421–431 (KVSDDDKEKGE) the composition is skewed to basic and acidic residues. Positions 438-448 (KSKKKKKKKKK) are enriched in basic residues. A compositionally biased stretch (basic and acidic residues) spans 449 to 470 (QGEDNSHTQDTEDLEKDTREEL). Phosphoserine is present on residues S454, S475, S491, and S493. 2 stretches are compositionally biased toward polar residues: residues 517-533 (PSITLSKGDSDNSSSQV) and 546-565 (NAKQNSVPPSQTKSETNWES). S565 carries the post-translational modification Phosphoserine. The span at 568–579 (QIKKKKKARRET) shows a compositional bias: basic residues.

In terms of assembly, interacts with BCCIP, CREBBP/CBP and RELA/p65. In terms of tissue distribution, in the mammary gland, expressed at the apical surface of epithelial cells lining ducts, as well as in the mammary fat pad. Not detected in the spleen, kidney, lung, or skin; minute amounts seen in the liver. Expressed in Purkinje neurons in the early postnatal and adult cerebellum. Overexpressed in mammary tumors (at protein level).

The protein resides in the endoplasmic reticulum membrane. The protein localises to the nucleus membrane. Its subcellular location is the cell junction. It localises to the tight junction. It is found in the nucleus. The protein resides in the nucleolus. The protein localises to the cytoplasm. Its subcellular location is the perinuclear region. In terms of biological role, down-regulates SLC1A2/EAAT2 promoter activity when expressed ectopically. Activates the nuclear factor kappa-B (NF-kappa-B) transcription factor. Promotes anchorage-independent growth of immortalized melanocytes and astrocytes which is a key component in tumor cell expansion. Promotes lung metastasis and also has an effect on bone and brain metastasis, possibly by enhancing the seeding of tumor cells to the target organ endothelium. Induces chemoresistance. In Mus musculus (Mouse), this protein is Protein LYRIC (Mtdh).